We begin with the raw amino-acid sequence, 554 residues long: Membrane protein insertase YidC (554 aa).

5 helical membrane passes run 7–24, 362–382, 436–456, 475–495, and 510–530; these read VLWV…DNWQ, FVGN…AVFF, LPVV…LASV, PFFI…SLNP, and PIAF…YYVV.

The protein belongs to the OXA1/ALB3/YidC family. Type 1 subfamily. Interacts with the Sec translocase complex via SecD. Specifically interacts with transmembrane segments of nascent integral membrane proteins during membrane integration.

The protein resides in the cell inner membrane. Functionally, required for the insertion and/or proper folding and/or complex formation of integral membrane proteins into the membrane. Involved in integration of membrane proteins that insert both dependently and independently of the Sec translocase complex, as well as at least some lipoproteins. Aids folding of multispanning membrane proteins. The protein is Membrane protein insertase YidC of Burkholderia ambifaria (strain MC40-6).